A 443-amino-acid polypeptide reads, in one-letter code: MREIVHIQGGQCGNQIGAKFWEVISDEHGIDPTGTYHGDSDLQLERINVYYNEATGGRYVPRAILMDLEPGTMDSVRAGPFGQLFRPDNFVFGQTGAGNNWAKGHYTEGAELIDSVLDVVRKEAEGCDCLQGFQITHSLGGGTGSGMGTLLISKVREEYPDRIMETFSVVPSPKVSDTVVEPYNATLSVHQLVENADECMVIDNEALYDICFRTLKLTTPTYGDLNHLVSAAMSGVTCCLRFPGQLNSDLRKLAVNLIPFPRLHFFMIGFAPLTSRGSQQYRALTVPELTQQMFDAKNMMCAADPRHGRYLTASALFRGRMSTKEVDEQMLNVQNKNSSYFVEWIPNNIKSSICDIPPKGLKMAVTFVGNSTAIQEMFKRVAEQFTAMFRRKAFLHWYTGEGMDEMEFTEAESNMNDLVSEYQQYQDATAEEEGEFEEEEGEN.

Residues Gln11, Glu69, Ser138, Gly142, Thr143, Gly144, Asn204, and Asn226 each coordinate GTP. Glu69 is a binding site for Mg(2+). The tract at residues 424–443 (QYQDATAEEEGEFEEEEGEN) is disordered. Residues 429 to 443 (TAEEEGEFEEEEGEN) show a composition bias toward acidic residues.

Belongs to the tubulin family. As to quaternary structure, dimer of alpha and beta chains. A typical microtubule is a hollow water-filled tube with an outer diameter of 25 nm and an inner diameter of 15 nM. Alpha-beta heterodimers associate head-to-tail to form protofilaments running lengthwise along the microtubule wall with the beta-tubulin subunit facing the microtubule plus end conferring a structural polarity. Microtubules usually have 13 protofilaments but different protofilament numbers can be found in some organisms and specialized cells. The cofactor is Mg(2+). Post-translationally, some glutamate residues at the C-terminus are either polyglutamylated or polyglycylated. These 2 modifications occur exclusively on glutamate residues and result in either polyglutamate or polyglycine chains on the gamma-carboxyl group. Both modifications can coexist on the same protein on adjacent residues, and lowering polyglycylation levels increases polyglutamylation, and reciprocally. The precise function of such modifications is still unclear but they regulate the assembly and dynamics of axonemal microtubules.

The protein resides in the cytoplasm. Its subcellular location is the cytoskeleton. Its function is as follows. Tubulin is the major constituent of microtubules, a cylinder consisting of laterally associated linear protofilaments composed of alpha- and beta-tubulin heterodimers. Microtubules grow by the addition of GTP-tubulin dimers to the microtubule end, where a stabilizing cap forms. Below the cap, tubulin dimers are in GDP-bound state, owing to GTPase activity of alpha-tubulin. The sequence is that of Tubulin beta chain (BTU1) from Tetrahymena thermophila.